The primary structure comprises 373 residues: AA9 family lytic polysaccharide monooxygenase A (373 aa).

A signal peptide spans 1 to 20; that stretch reads MKSSTFGMLALAAAAKLVSA. Residue His-21 participates in Cu(2+) binding. Residues 36-55 form a disordered region; that stretch reads EGNSQSGYIRSPPSNSPITD. Cys-63 and Cys-183 are oxidised to a cystine. His-102 is a binding site for Cu(2+). O2 is bound by residues His-169 and Gln-178. Position 180 (Tyr-180) interacts with Cu(2+). The interval 234–333 is disordered; the sequence is GASGSSSSSS…NSVPQPSSNA (100 aa). 2 stretches are compositionally biased toward low complexity: residues 235–262 and 270–323; these read ASGS…APSS and PATS…AAPT. Residues 324–333 show a composition bias toward polar residues; the sequence is NSVPQPSSNA. Positions 335-371 constitute a CBM1 domain; the sequence is GAVKEWYQCGGLNYSGSTQCEEGLTCKKWNPYYHQCV. N-linked (GlcNAc...) asparagine glycosylation occurs at Asn-347.

This sequence belongs to the polysaccharide monooxygenase AA9 family. Cu(2+) serves as cofactor.

It is found in the secreted. The catalysed reaction is [(1-&gt;4)-beta-D-glucosyl]n+m + reduced acceptor + O2 = 4-dehydro-beta-D-glucosyl-[(1-&gt;4)-beta-D-glucosyl]n-1 + [(1-&gt;4)-beta-D-glucosyl]m + acceptor + H2O.. Functionally, lytic polysaccharide monooxygenase (LPMO) that depolymerizes crystalline and amorphous polysaccharides via the oxidation of scissile alpha- or beta-(1-4)-glycosidic bonds, yielding exclusively C4 oxidation products. Catalysis by LPMOs requires the reduction of the active-site copper from Cu(II) to Cu(I) by a reducing agent and H(2)O(2) or O(2) as a cosubstrate. In addition to cellulose, also cleaves the beta-(1!4)-glucan backbone of tamarind xyloglucan, but only next to unsubstituted glucosyl units. The protein is AA9 family lytic polysaccharide monooxygenase A of Aspergillus tamarii.